A 180-amino-acid chain; its full sequence is Trafficking protein particle complex subunit 3 (180 aa).

Residue cysteine 68 is the site of S-palmitoyl cysteine attachment.

Belongs to the TRAPP small subunits family. BET3 subfamily. Homodimer. Component of the multisubunit transport protein particle (TRAPP) complex, which includes at least TRAPPC2, TRAPPC2L, TRAPPC3, TRAPPC3L, TRAPPC4, TRAPPC5, TRAPPC8, TRAPPC9, TRAPPC10, TRAPPC11 and TRAPPC12. Heterodimer with TRAPPC6A. The heterodimer TRAPPC3-TRAPPC6A interacts with TRAPPC2L. Heterodimer with TRAPPC6b. The heterodimer TRAPPC6B-TRAPPC3 interacts with TRAPPC1 likely providing a core for TRAPP complex formation.

The protein localises to the golgi apparatus. It localises to the cis-Golgi network. The protein resides in the endoplasmic reticulum. Functionally, may play a role in vesicular transport from endoplasmic reticulum to Golgi. The sequence is that of Trafficking protein particle complex subunit 3 from Homo sapiens (Human).